The primary structure comprises 220 residues: Protein Syd (220 aa).

The protein belongs to the Syd family.

Its subcellular location is the cell inner membrane. Its function is as follows. Interacts with the SecY protein in vivo. May bind preferentially to an uncomplexed state of SecY, thus functioning either as a chelating agent for excess SecY in the cell or as a regulatory factor that negatively controls the translocase function. The polypeptide is Protein Syd (Shewanella loihica (strain ATCC BAA-1088 / PV-4)).